Reading from the N-terminus, the 283-residue chain is MSATILDGKATKNTIFEELRPRVARLAEQGRTPGLATVLVGDDPASHSYVRAKHNDCAKVGINSIRKELPADASQSDVEAVVDELNADPACHGYIIQLPLPEQLDAGPLLERIAPEKDADGLHPISLGRLVLGEQAPLPCTPRGIIELLRRYDVPLAGARVAVVGRGITVGRPIGLLLTRRSENATVTLCHTGTKDLAEEVRRADIVVAAAGRPHLITADMVRPGAAVLDVGVTRTDSGLAGDVHPDVAEVAGFLSPNPGGIGPMTRAMLLSNVVEAAERAAS.

Residues 165–167 (GRG), Thr-192, and Val-233 contribute to the NADP(+) site.

It belongs to the tetrahydrofolate dehydrogenase/cyclohydrolase family. As to quaternary structure, homodimer.

It carries out the reaction (6R)-5,10-methylene-5,6,7,8-tetrahydrofolate + NADP(+) = (6R)-5,10-methenyltetrahydrofolate + NADPH. The catalysed reaction is (6R)-5,10-methenyltetrahydrofolate + H2O = (6R)-10-formyltetrahydrofolate + H(+). The protein operates within one-carbon metabolism; tetrahydrofolate interconversion. Catalyzes the oxidation of 5,10-methylenetetrahydrofolate to 5,10-methenyltetrahydrofolate and then the hydrolysis of 5,10-methenyltetrahydrofolate to 10-formyltetrahydrofolate. The chain is Bifunctional protein FolD 2 from Saccharopolyspora erythraea (strain ATCC 11635 / DSM 40517 / JCM 4748 / NBRC 13426 / NCIMB 8594 / NRRL 2338).